Here is an 89-residue protein sequence, read N- to C-terminus: Small ribosomal subunit protein uS15 (89 aa).

Belongs to the universal ribosomal protein uS15 family. Part of the 30S ribosomal subunit. Forms a bridge to the 50S subunit in the 70S ribosome, contacting the 23S rRNA.

Its function is as follows. One of the primary rRNA binding proteins, it binds directly to 16S rRNA where it helps nucleate assembly of the platform of the 30S subunit by binding and bridging several RNA helices of the 16S rRNA. Functionally, forms an intersubunit bridge (bridge B4) with the 23S rRNA of the 50S subunit in the ribosome. The polypeptide is Small ribosomal subunit protein uS15 (Carboxydothermus hydrogenoformans (strain ATCC BAA-161 / DSM 6008 / Z-2901)).